The sequence spans 473 residues: Cysteine--tRNA ligase (473 aa).

Cys-27 provides a ligand contact to Zn(2+). Residues Ile-29–His-39 carry the 'HIGH' region motif. Positions 213, 238, and 242 each coordinate Zn(2+). The 'KMSKS' region signature appears at Lys-271 to Ser-275. Lys-274 lines the ATP pocket.

It belongs to the class-I aminoacyl-tRNA synthetase family. It depends on Zn(2+) as a cofactor.

The protein localises to the cytoplasm. The enzyme catalyses tRNA(Cys) + L-cysteine + ATP = L-cysteinyl-tRNA(Cys) + AMP + diphosphate. In Pyrobaculum islandicum (strain DSM 4184 / JCM 9189 / GEO3), this protein is Cysteine--tRNA ligase.